We begin with the raw amino-acid sequence, 858 residues long: Heat shock protein 105 kDa (858 aa).

Ser-2 carries the post-translational modification N-acetylserine. Lys-471 carries the N6-acetyllysine modification. 2 disordered regions span residues 500 to 585 (KVPT…PPEA) and 801 to 858 (VNQP…MDLD). Over residues 504–515 (EEDDGSSVEADM) the composition is skewed to acidic residues. Ser-509 and Ser-510 each carry phosphoserine. Residues 533–549 (QQDNSEAGTQPQVQTDG) are compositionally biased toward polar residues. Ser-558 carries the post-translational modification Phosphoserine. Composition is skewed to basic and acidic residues over residues 564 to 585 (EENKIPDADKANEKKVDQPPEA) and 806 to 815 (PKIESPKLER). Ser-810 is subject to Phosphoserine. Thr-816 carries the phosphothreonine modification. The segment covering 822 to 834 (LDKKEDLEGKDNF) has biased composition (basic and acidic residues).

Belongs to the heat shock protein 70 family. Interacts with HSPA8/HSC70. Interacts with HSPA1A (via NBD) and HSPA1B (via NBD). Post-translationally, phosphorylation on Ser-509 may be important for regulation of the HSPA8/HSC70 chaperone activity. In terms of tissue distribution, predominantly expressed in the brain and also found in the liver.

The protein localises to the cytoplasm. Its function is as follows. Acts as a nucleotide-exchange factor (NEF) for chaperone proteins HSPA1A and HSPA1B, promoting the release of ADP from HSPA1A/B thereby triggering substrate release. Prevents the aggregation of denatured proteins in cells under severe stress, on which the ATP levels decrease markedly. Inhibits HSPA8/HSC70 ATPase and chaperone activities. The polypeptide is Heat shock protein 105 kDa (HSPH1) (Cricetulus griseus (Chinese hamster)).